We begin with the raw amino-acid sequence, 165 residues long: Growth arrest and DNA damage-inducible protein GADD45 alpha (165 aa).

The residue at position 2 (T2) is a Phosphothreonine.

It belongs to the GADD45 family. In terms of assembly, interacts with AURKA, PCNA, GADD45GIP1 and MAPK14.

Its subcellular location is the nucleus. Might affect PCNA interaction with some CDK (cell division protein kinase) complexes; stimulates DNA excision repair in vitro and inhibits entry of cells into S phase. In T-cells, functions as a regulator of p38 MAPKs by inhibiting p88 phosphorylation and activity. In Rattus norvegicus (Rat), this protein is Growth arrest and DNA damage-inducible protein GADD45 alpha (Gadd45a).